The primary structure comprises 165 residues: Ecotin-like protein 4 (165 aa).

Belongs to the protease inhibitor I11 (ecotin) family.

This chain is Ecotin-like protein 4, found in Trypanosoma brucei brucei (strain 927/4 GUTat10.1).